A 389-amino-acid chain; its full sequence is Lipid-A-disaccharide synthase (389 aa).

The protein belongs to the LpxB family.

It carries out the reaction a lipid X + a UDP-2-N,3-O-bis[(3R)-3-hydroxyacyl]-alpha-D-glucosamine = a lipid A disaccharide + UDP + H(+). It participates in bacterial outer membrane biogenesis; LPS lipid A biosynthesis. Condensation of UDP-2,3-diacylglucosamine and 2,3-diacylglucosamine-1-phosphate to form lipid A disaccharide, a precursor of lipid A, a phosphorylated glycolipid that anchors the lipopolysaccharide to the outer membrane of the cell. The polypeptide is Lipid-A-disaccharide synthase (Burkholderia ambifaria (strain MC40-6)).